Reading from the N-terminus, the 279-residue chain is NAD kinase (279 aa).

Aspartate 57 acts as the Proton acceptor in catalysis. Residues 57 to 58, 133 to 134, arginine 159, aspartate 161, and 172 to 177 each bind NAD(+); these read DG, NE, and TAYNKS.

It belongs to the NAD kinase family. It depends on a divalent metal cation as a cofactor.

The protein localises to the cytoplasm. It catalyses the reaction NAD(+) + ATP = ADP + NADP(+) + H(+). In terms of biological role, involved in the regulation of the intracellular balance of NAD and NADP, and is a key enzyme in the biosynthesis of NADP. Catalyzes specifically the phosphorylation on 2'-hydroxyl of the adenosine moiety of NAD to yield NADP. This is NAD kinase from Streptococcus pyogenes serotype M2 (strain MGAS10270).